Here is a 225-residue protein sequence, read N- to C-terminus: Histone-arginine methyltransferase METTL23 (225 aa).

Belongs to the methyltransferase superfamily. METTL23 family. In terms of assembly, interacts with HSPA5, HSP90B1, TUBULIN, UGGT1 and UGGT2. Interacts with TET3. Interacts with STPG4.

It localises to the nucleus. Its subcellular location is the cytoplasm. The catalysed reaction is L-arginyl-[protein] + 2 S-adenosyl-L-methionine = N(omega),N(omega)-dimethyl-L-arginyl-[protein] + 2 S-adenosyl-L-homocysteine + 2 H(+). Its function is as follows. Histone methyltransferase that dimethylates histone H3 at 'Arg-17', forming asymmetric dimethylarginine (H3R17me2a), leading to activate transcription via chromatin remodeling. Maternal factor involved in epigenetic chromatin reprogramming of the paternal genome in the zygote: mediates H3R17me2a, promoting histone H3.3 incorporation in the male pronucleus, leading to TET3 recruitment and subsequent DNA demethylation. This is Histone-arginine methyltransferase METTL23 from Rattus norvegicus (Rat).